We begin with the raw amino-acid sequence, 171 residues long: Adenine phosphoribosyltransferase (171 aa).

Belongs to the purine/pyrimidine phosphoribosyltransferase family. Homodimer.

It localises to the cytoplasm. The catalysed reaction is AMP + diphosphate = 5-phospho-alpha-D-ribose 1-diphosphate + adenine. It functions in the pathway purine metabolism; AMP biosynthesis via salvage pathway; AMP from adenine: step 1/1. Catalyzes a salvage reaction resulting in the formation of AMP, that is energically less costly than de novo synthesis. The chain is Adenine phosphoribosyltransferase from Rhodospirillum rubrum (strain ATCC 11170 / ATH 1.1.1 / DSM 467 / LMG 4362 / NCIMB 8255 / S1).